Consider the following 549-residue polypeptide: Lipase 3 (549 aa).

The signal sequence occupies residues 1–15; that stretch reads MKLALALSLIASVAA. A disulfide bond links cysteine 75 and cysteine 112. Serine 224 serves as the catalytic Acyl-ester intermediate. Cysteine 283 and cysteine 292 form a disulfide bridge. An N-linked (GlcNAc...) asparagine glycan is attached at asparagine 329. The active-site Charge relay system is the glutamate 356. Asparagine 366 carries an N-linked (GlcNAc...) asparagine glycan. The Charge relay system role is filled by histidine 464.

This sequence belongs to the type-B carboxylesterase/lipase family. As to quaternary structure, monomer and homodimer.

It carries out the reaction a triacylglycerol + H2O = a diacylglycerol + a fatty acid + H(+). In Diutina rugosa (Yeast), this protein is Lipase 3 (LIP3).